Reading from the N-terminus, the 169-residue chain is S-ribosylhomocysteine lyase (169 aa).

Residues H54, H58, and C128 each contribute to the Fe cation site.

It belongs to the LuxS family. As to quaternary structure, homodimer. The cofactor is Fe cation.

The catalysed reaction is S-(5-deoxy-D-ribos-5-yl)-L-homocysteine = (S)-4,5-dihydroxypentane-2,3-dione + L-homocysteine. In terms of biological role, involved in the synthesis of autoinducer 2 (AI-2) which is secreted by bacteria and is used to communicate both the cell density and the metabolic potential of the environment. The regulation of gene expression in response to changes in cell density is called quorum sensing. Catalyzes the transformation of S-ribosylhomocysteine (RHC) to homocysteine (HC) and 4,5-dihydroxy-2,3-pentadione (DPD). The chain is S-ribosylhomocysteine lyase from Shewanella amazonensis (strain ATCC BAA-1098 / SB2B).